A 264-amino-acid chain; its full sequence is Thymidylate synthase (264 aa).

DUMP is bound by residues arginine 21 and 126–127; that span reads RR. Cysteine 146 serves as the catalytic Nucleophile. Residues 166–169, asparagine 177, and 207–209 each bind dUMP; these read RSAD and HLY. (6R)-5,10-methylene-5,6,7,8-tetrahydrofolate is bound at residue aspartate 169. Alanine 263 provides a ligand contact to (6R)-5,10-methylene-5,6,7,8-tetrahydrofolate.

Belongs to the thymidylate synthase family. Bacterial-type ThyA subfamily. Homodimer.

It is found in the cytoplasm. The enzyme catalyses dUMP + (6R)-5,10-methylene-5,6,7,8-tetrahydrofolate = 7,8-dihydrofolate + dTMP. It functions in the pathway pyrimidine metabolism; dTTP biosynthesis. In terms of biological role, catalyzes the reductive methylation of 2'-deoxyuridine-5'-monophosphate (dUMP) to 2'-deoxythymidine-5'-monophosphate (dTMP) while utilizing 5,10-methylenetetrahydrofolate (mTHF) as the methyl donor and reductant in the reaction, yielding dihydrofolate (DHF) as a by-product. This enzymatic reaction provides an intracellular de novo source of dTMP, an essential precursor for DNA biosynthesis. The chain is Thymidylate synthase from Bradyrhizobium sp. (strain ORS 278).